The primary structure comprises 201 residues: Putative manganese efflux pump MntP 2 (201 aa).

A run of 6 helical transmembrane segments spans residues 3–23 (LISV…VSIT), 39–59 (IGLF…SIGI), 65–85 (IAAL…GKMI), 116–136 (LILL…SFAF), 141–161 (IINT…IGVM), and 176–196 (ILGG…HTNI).

Belongs to the MntP (TC 9.B.29) family.

The protein resides in the cell membrane. In terms of biological role, probably functions as a manganese efflux pump. The sequence is that of Putative manganese efflux pump MntP 2 from Clostridium botulinum (strain Langeland / NCTC 10281 / Type F).